The following is a 335-amino-acid chain: Beta-ketoacyl-[acyl-carrier-protein] synthase III (335 aa).

Catalysis depends on residues Cys-118 and His-259. An ACP-binding region spans residues 260–264; sequence QANER. Asn-289 is a catalytic residue.

Belongs to the thiolase-like superfamily. FabH family. Homodimer.

The protein localises to the cytoplasm. The catalysed reaction is malonyl-[ACP] + acetyl-CoA + H(+) = 3-oxobutanoyl-[ACP] + CO2 + CoA. It participates in lipid metabolism; fatty acid biosynthesis. Catalyzes the condensation reaction of fatty acid synthesis by the addition to an acyl acceptor of two carbons from malonyl-ACP. Catalyzes the first condensation reaction which initiates fatty acid synthesis and may therefore play a role in governing the total rate of fatty acid production. Possesses both acetoacetyl-ACP synthase and acetyl transacylase activities. Its substrate specificity determines the biosynthesis of branched-chain and/or straight-chain of fatty acids. This Chlamydia caviae (strain ATCC VR-813 / DSM 19441 / 03DC25 / GPIC) (Chlamydophila caviae) protein is Beta-ketoacyl-[acyl-carrier-protein] synthase III.